A 212-amino-acid chain; its full sequence is Thymidylate kinase (212 aa).

10-17 lines the ATP pocket; sequence GLEGAGKS.

It belongs to the thymidylate kinase family.

It catalyses the reaction dTMP + ATP = dTDP + ADP. Its function is as follows. Phosphorylation of dTMP to form dTDP in both de novo and salvage pathways of dTTP synthesis. This is Thymidylate kinase from Vibrio cholerae serotype O1 (strain ATCC 39541 / Classical Ogawa 395 / O395).